We begin with the raw amino-acid sequence, 1070 residues long: DNA-directed RNA polymerase subunit beta (1070 aa).

The protein belongs to the RNA polymerase beta chain family. As to quaternary structure, in plastids the minimal PEP RNA polymerase catalytic core is composed of four subunits: alpha, beta, beta', and beta''. When a (nuclear-encoded) sigma factor is associated with the core the holoenzyme is formed, which can initiate transcription.

Its subcellular location is the plastid. It is found in the chloroplast. The enzyme catalyses RNA(n) + a ribonucleoside 5'-triphosphate = RNA(n+1) + diphosphate. DNA-dependent RNA polymerase catalyzes the transcription of DNA into RNA using the four ribonucleoside triphosphates as substrates. This Solanum bulbocastanum (Wild potato) protein is DNA-directed RNA polymerase subunit beta.